We begin with the raw amino-acid sequence, 149 residues long: D-aminoacyl-tRNA deacylase (149 aa).

The short motif at 137–138 (GP) is the Gly-cisPro motif, important for rejection of L-amino acids element.

It belongs to the DTD family. Homodimer.

The protein resides in the cytoplasm. It carries out the reaction glycyl-tRNA(Ala) + H2O = tRNA(Ala) + glycine + H(+). It catalyses the reaction a D-aminoacyl-tRNA + H2O = a tRNA + a D-alpha-amino acid + H(+). Functionally, an aminoacyl-tRNA editing enzyme that deacylates mischarged D-aminoacyl-tRNAs. Also deacylates mischarged glycyl-tRNA(Ala), protecting cells against glycine mischarging by AlaRS. Acts via tRNA-based rather than protein-based catalysis; rejects L-amino acids rather than detecting D-amino acids in the active site. By recycling D-aminoacyl-tRNA to D-amino acids and free tRNA molecules, this enzyme counteracts the toxicity associated with the formation of D-aminoacyl-tRNA entities in vivo and helps enforce protein L-homochirality. In Clostridium acetobutylicum (strain ATCC 824 / DSM 792 / JCM 1419 / IAM 19013 / LMG 5710 / NBRC 13948 / NRRL B-527 / VKM B-1787 / 2291 / W), this protein is D-aminoacyl-tRNA deacylase.